The following is an 892-amino-acid chain: Alanine--tRNA ligase (892 aa).

Residues His596, His600, Cys700, and His704 each coordinate Zn(2+).

It belongs to the class-II aminoacyl-tRNA synthetase family. It depends on Zn(2+) as a cofactor.

The protein localises to the cytoplasm. The catalysed reaction is tRNA(Ala) + L-alanine + ATP = L-alanyl-tRNA(Ala) + AMP + diphosphate. Its function is as follows. Catalyzes the attachment of alanine to tRNA(Ala) in a two-step reaction: alanine is first activated by ATP to form Ala-AMP and then transferred to the acceptor end of tRNA(Ala). Also edits incorrectly charged Ser-tRNA(Ala) and Gly-tRNA(Ala) via its editing domain. This chain is Alanine--tRNA ligase, found in Methanococcus maripaludis (strain C7 / ATCC BAA-1331).